The chain runs to 124 residues: Large ribosomal subunit protein uL18 (124 aa).

Belongs to the universal ribosomal protein uL18 family. As to quaternary structure, part of the 50S ribosomal subunit; part of the 5S rRNA/L5/L18/L25 subcomplex. Contacts the 5S and 23S rRNAs.

In terms of biological role, this is one of the proteins that bind and probably mediate the attachment of the 5S RNA into the large ribosomal subunit, where it forms part of the central protuberance. The protein is Large ribosomal subunit protein uL18 of Parafrankia sp. (strain EAN1pec).